A 129-amino-acid polypeptide reads, in one-letter code: Small ribosomal subunit protein uS11 (129 aa).

This sequence belongs to the universal ribosomal protein uS11 family. In terms of assembly, part of the 30S ribosomal subunit. Interacts with proteins S7 and S18. Binds to IF-3.

Functionally, located on the platform of the 30S subunit, it bridges several disparate RNA helices of the 16S rRNA. Forms part of the Shine-Dalgarno cleft in the 70S ribosome. This is Small ribosomal subunit protein uS11 from Lactiplantibacillus plantarum (strain ATCC BAA-793 / NCIMB 8826 / WCFS1) (Lactobacillus plantarum).